We begin with the raw amino-acid sequence, 137 residues long: MSNDNKKVYTLEEVAKHNSKDDCWLIIGGKVYNVSKFLEDHPGGDDVLLSSTGKDATDDFEDVGHSTTARAMMDEYYVGDIDTSTIPARTKYVPPKQPHYNQDKTPEFIIKILQFLVPLAILGLAVAIRIYTKSESA.

Residues Lys-6–Asp-82 enclose the Cytochrome b5 heme-binding domain. Heme-binding residues include His-41 and His-65. Residues Phe-108–Ile-128 form a helical membrane-spanning segment.

The protein belongs to the cytochrome b5 family.

It is found in the endoplasmic reticulum membrane. The protein resides in the microsome membrane. In terms of biological role, membrane bound hemoprotein which function as an electron carrier for several membrane bound oxygenases. This is Cytochrome b5 from Oryza sativa subsp. japonica (Rice).